The following is a 252-amino-acid chain: Hydroxyacylglutathione hydrolase (252 aa).

Zn(2+) is bound by residues histidine 52, histidine 54, aspartate 56, histidine 57, histidine 107, aspartate 128, and histidine 166.

The protein belongs to the metallo-beta-lactamase superfamily. Glyoxalase II family. As to quaternary structure, monomer. Zn(2+) serves as cofactor.

It catalyses the reaction an S-(2-hydroxyacyl)glutathione + H2O = a 2-hydroxy carboxylate + glutathione + H(+). It functions in the pathway secondary metabolite metabolism; methylglyoxal degradation; (R)-lactate from methylglyoxal: step 2/2. Thiolesterase that catalyzes the hydrolysis of S-D-lactoyl-glutathione to form glutathione and D-lactic acid. The polypeptide is Hydroxyacylglutathione hydrolase (Neisseria meningitidis serogroup C (strain 053442)).